A 142-amino-acid polypeptide reads, in one-letter code: Transcription antitermination protein NusB (142 aa).

This sequence belongs to the NusB family.

Its function is as follows. Involved in transcription antitermination. Required for transcription of ribosomal RNA (rRNA) genes. Binds specifically to the boxA antiterminator sequence of the ribosomal RNA (rrn) operons. This is Transcription antitermination protein NusB from Anaeromyxobacter dehalogenans (strain 2CP-1 / ATCC BAA-258).